The chain runs to 28 residues: Conotoxin Cl6a (28 aa).

Cystine bridges form between Cys3/Cys13, Cys7/Cys19, and Cys12/Cys24.

Expressed by the venom duct.

The protein resides in the secreted. The sequence is that of Conotoxin Cl6a from Californiconus californicus (California cone).